We begin with the raw amino-acid sequence, 724 residues long: Long-chain-fatty-acid--CoA ligase ACSBG1 (724 aa).

The interval 1-30 is disordered; the sequence is MPRNSGAGYGCPHGDPSMLDSRETPQESRQ. The segment covering 20-30 has biased composition (basic and acidic residues); sequence DSRETPQESRQ. 2 positions are modified to phosphoserine: Ser53 and Ser56. ATP contacts are provided by residues 282 to 290, 472 to 477, Asp550, and Arg565; these read TSGTTGNPK and AGYGLS. Residue Tyr658 is modified to Phosphotyrosine. Lys701 provides a ligand contact to ATP.

The protein belongs to the ATP-dependent AMP-binding enzyme family. Bubblegum subfamily. As to expression, expressed primarily in brain. Expressed at lower level in testis and adrenal gland. Present in all regions of brain except pituitary.

It is found in the cytoplasm. The protein localises to the cytoplasmic vesicle. It localises to the microsome. The protein resides in the endoplasmic reticulum. Its subcellular location is the cell membrane. It catalyses the reaction a long-chain fatty acid + ATP + CoA = a long-chain fatty acyl-CoA + AMP + diphosphate. It carries out the reaction (E)-hexadec-2-enoate + ATP + CoA = (2E)-hexadecenoyl-CoA + AMP + diphosphate. The catalysed reaction is hexadecanoate + ATP + CoA = hexadecanoyl-CoA + AMP + diphosphate. Catalyzes the conversion of fatty acids such as long-chain and very long-chain fatty acids to their active form acyl-CoAs for both synthesis of cellular lipids, and degradation via beta-oxidation. Can activate diverse saturated, monosaturated and polyunsaturated fatty acids. In Homo sapiens (Human), this protein is Long-chain-fatty-acid--CoA ligase ACSBG1.